We begin with the raw amino-acid sequence, 1073 residues long: Pleckstrin homology domain-containing family G member 5 (1073 aa).

5 disordered regions span residues 1 to 28 (MGTG…SQLL), 91 to 135 (VSTR…ARRR), 217 to 261 (PGDE…ESSL), 278 to 309 (GEAG…GINE), and 367 to 388 (SWEE…RLED). Composition is skewed to basic and acidic residues over residues 217 to 231 (PGDE…KDSK) and 249 to 260 (ERVDPQSRRESS). Residues 367 to 381 (SWEEEEEDDEEDEES) are compositionally biased toward acidic residues. The DH domain occupies 406 to 598 (HQQEAVWELL…ERFIHHVNTC (193 aa)). A PH domain is found at 654–754 (QLLLEGSLRM…WVDTIYNAQN (101 aa)). Disordered stretches follow at residues 762–818 (QLSA…TSDG), 833–873 (TLSS…GPVD), and 899–925 (PVVE…TPVQ). Positions 777–790 (LEEEEDEQEEEGEE) are enriched in acidic residues. Polar residues-rich tracts occupy residues 791 to 809 (SGTS…SNSL) and 844 to 864 (VSSQ…TPTS). Phosphothreonine is present on T793. S798 carries the phosphoserine modification. The span at 900 to 915 (VVEPAPVPQTPSPQPS) shows a compositional bias: pro residues. T909 bears the Phosphothreonine mark. Phosphoserine is present on residues S911, S936, and S941. A disordered region spans residues 993-1046 (MCDPCHGPQLSESENRPSHMTGGPADSARRRCREMPSGTMSRVQSEPPSGVSAQ). The span at 1030-1039 (GTMSRVQSEP) shows a compositional bias: polar residues.

Interacts with GIPC1/synectin and RHOA. In terms of tissue distribution, expressed in neurons and glial cells of the peripheral nervous system, with highest levels of expression in the brain and sciatic nerve endoneurium. Isoform 2 is expressed at detectable levels only in malignant cells.

It localises to the cytoplasm. It is found in the perinuclear region. The protein resides in the cell membrane. The protein localises to the cell junction. Its subcellular location is the cell projection. It localises to the lamellipodium. Functions as a guanine exchange factor (GEF) for RAB26 and thus regulates autophagy of synaptic vesicles in axon terminal of motoneurons. Involved in the control of neuronal cell differentiation. Plays a role in angiogenesis through regulation of endothelial cells chemotaxis. Also affects the migration, adhesion, and matrix/bone degradation in macrophages and osteoclasts. The chain is Pleckstrin homology domain-containing family G member 5 (Plekhg5) from Mus musculus (Mouse).